The sequence spans 562 residues: Oligo-1,6-glucosidase (562 aa).

Residues aspartate 21, asparagine 23, aspartate 25, and aspartate 29 each coordinate Ca(2+). Catalysis depends on aspartate 199, which acts as the Nucleophile. Glutamate 256 (proton donor) is an active-site residue.

Belongs to the glycosyl hydrolase 13 family.

Its subcellular location is the cytoplasm. The enzyme catalyses Hydrolysis of (1-&gt;6)-alpha-D-glucosidic linkages in some oligosaccharides produced from starch and glycogen by alpha-amylase, and in isomaltose.. This chain is Oligo-1,6-glucosidase (malL), found in Parageobacillus thermoglucosidasius (Geobacillus thermoglucosidasius).